The following is a 447-amino-acid chain: Phosphoglucosamine mutase (447 aa).

The active-site Phosphoserine intermediate is S106. Positions 106, 245, 247, and 249 each coordinate Mg(2+). S106 is subject to Phosphoserine.

The protein belongs to the phosphohexose mutase family. The cofactor is Mg(2+). Post-translationally, activated by phosphorylation.

The catalysed reaction is alpha-D-glucosamine 1-phosphate = D-glucosamine 6-phosphate. In terms of biological role, catalyzes the conversion of glucosamine-6-phosphate to glucosamine-1-phosphate. The chain is Phosphoglucosamine mutase from Cupriavidus taiwanensis (strain DSM 17343 / BCRC 17206 / CCUG 44338 / CIP 107171 / LMG 19424 / R1) (Ralstonia taiwanensis (strain LMG 19424)).